Here is a 775-residue protein sequence, read N- to C-terminus: Polyribonucleotide nucleotidyltransferase (775 aa).

The disordered stretch occupies residues 223–247 (DEQVPEKPRKGRRRGRKSSPRKKTD). Basic residues predominate over residues 231 to 243 (RKGRRRGRKSSPR). Positions 567 and 573 each coordinate Mg(2+). The KH domain maps to 633-692 (PRITTISVPVSKIGEVIGPKGKNINQITEDTGARVSIEDDGTVFISATSGGSAEAAVDRI). The 70-residue stretch at 704–773 (GERFLGTVVK…NRGKISLVPV (70 aa)) folds into the S1 motif domain.

Belongs to the polyribonucleotide nucleotidyltransferase family. Requires Mg(2+) as cofactor.

It localises to the cytoplasm. It catalyses the reaction RNA(n+1) + phosphate = RNA(n) + a ribonucleoside 5'-diphosphate. Involved in mRNA degradation. Catalyzes the phosphorolysis of single-stranded polyribonucleotides processively in the 3'- to 5'-direction. In Corynebacterium kroppenstedtii (strain DSM 44385 / JCM 11950 / CIP 105744 / CCUG 35717), this protein is Polyribonucleotide nucleotidyltransferase.